Reading from the N-terminus, the 342-residue chain is Cilia- and flagella-associated protein 36 (342 aa).

Ser-85 and Ser-147 each carry phosphoserine. Residues 150–187 (EHEEMKILREVLRKSKEEYDQEEERKRKKQLSEAKTEE) are a coiled coil. Positions 166 to 194 (EEYDQEEERKRKKQLSEAKTEEPTVHSSE) are disordered. Basic and acidic residues predominate over residues 179–189 (QLSEAKTEEPT). Ser-201 carries the phosphoserine modification. 2 disordered regions span residues 229-250 (RKVERSETSSLPQKDLKIPGLE) and 282-322 (KLMS…AEEK). Composition is skewed to basic and acidic residues over residues 282–292 (KLMSMRKDMRT) and 300–322 (QKGKPTGEVEEMTEKPEMTAEEK).

This sequence belongs to the CFAP36 family. As to quaternary structure, interacts with ARL3. Expressed in several human tissues including brain, testis, heart, lung, pancreas and spleen (at protein level).

The protein resides in the nucleus. The protein localises to the cytoplasm. Its subcellular location is the cell projection. It is found in the cilium. It localises to the flagellum. Functionally, may act as an effector for ARL3. The sequence is that of Cilia- and flagella-associated protein 36 (CFAP36) from Homo sapiens (Human).